Consider the following 396-residue polypeptide: Elongation factor Tu (396 aa).

In terms of domain architecture, tr-type G spans 10–206 (KPHVNVGTIG…ALDTYIPTPE (197 aa)). The G1 stretch occupies residues 19-26 (GHVDHGKT). Position 19 to 26 (19 to 26 (GHVDHGKT)) interacts with GTP. Thr26 contacts Mg(2+). The tract at residues 60–64 (GITIN) is G2. The interval 81-84 (DCPG) is G3. GTP is bound by residues 81–85 (DCPGH) and 136–139 (NKAD). The interval 136-139 (NKAD) is G4. The interval 174 to 176 (SAK) is G5.

Belongs to the TRAFAC class translation factor GTPase superfamily. Classic translation factor GTPase family. EF-Tu/EF-1A subfamily. Monomer.

It localises to the cytoplasm. The catalysed reaction is GTP + H2O = GDP + phosphate + H(+). Functionally, GTP hydrolase that promotes the GTP-dependent binding of aminoacyl-tRNA to the A-site of ribosomes during protein biosynthesis. The sequence is that of Elongation factor Tu from Bordetella bronchiseptica (strain ATCC BAA-588 / NCTC 13252 / RB50) (Alcaligenes bronchisepticus).